We begin with the raw amino-acid sequence, 76 residues long: Alpha/kappa-conotoxin-like fe14.1 (76 aa).

The N-terminal stretch at 1–24 (MPSVRSVTCCCLLWMMLSVQLVTP) is a signal peptide. The propeptide occupies 25 to 39 (GSPGTAQLSGHRTAR). 2 disulfides stabilise this stretch: C46–C61 and C50–C63. R64 bears the Arginine amide mark. Residues 65 to 76 (GKRDVVSSSMAV) constitute a propeptide that is removed on maturation.

It belongs to the conotoxin J superfamily. Expressed by the venom duct.

The protein resides in the secreted. In terms of biological role, highly inhibits both nicotinic acetylcholine receptors (neuronal (alpha-3/beta-4) and muscular (alpha-1/beta-1/epsilon/delta) subtypes) and the voltage-gated potassium channel Kv1.6/KCNA6 subtype. This Conus ferrugineus (Cone snail) protein is Alpha/kappa-conotoxin-like fe14.1.